The chain runs to 115 residues: Cell division protein FtsL (115 aa).

The Cytoplasmic portion of the chain corresponds to 1–25 (MNTATRVIVAQNVRTRNRTFQITKQ). The helical transmembrane segment at 26–46 (GVVIVALVIALLCSAFGVVYF) threads the bilayer. Over 47–115 (KDLNRRLFIQ…ILVNADAMIE (69 aa)) the chain is Periplasmic.

This sequence belongs to the FtsL family. In terms of assembly, part of a complex composed of FtsB, FtsL and FtsQ.

Its subcellular location is the cell inner membrane. Functionally, essential cell division protein. May link together the upstream cell division proteins, which are predominantly cytoplasmic, with the downstream cell division proteins, which are predominantly periplasmic. This chain is Cell division protein FtsL, found in Coxiella burnetii (strain RSA 493 / Nine Mile phase I).